Here is a 175-residue protein sequence, read N- to C-terminus: Ribulose bisphosphate carboxylase small subunit, chloroplastic (175 aa).

A chloroplast-targeting transit peptide spans 1–46 (MAPSVMASSATTVAPFQGLKSTAGMPVARRSGNSSFGNVSNGGRIR). An interaction with large subunit region spans residues 60-64 (ETLSY).

The protein belongs to the RuBisCO small chain family. In terms of assembly, heterohexadecamer of 8 large and 8 small subunits.

It is found in the plastid. The protein resides in the chloroplast. Its function is as follows. RuBisCO catalyzes two reactions: the carboxylation of D-ribulose 1,5-bisphosphate, the primary event in carbon dioxide fixation, as well as the oxidative fragmentation of the pentose substrate. Both reactions occur simultaneously and in competition at the same active site. Although the small subunit is not catalytic it is essential for maximal activity. This is Ribulose bisphosphate carboxylase small subunit, chloroplastic from Oryza sativa subsp. indica (Rice).